The chain runs to 183 residues: Ribulose bisphosphate carboxylase small subunit, chloroplastic (183 aa).

Residues 1–58 constitute a chloroplast transit peptide; that stretch reads MASSMLSTAAVACINRASPAQASMVAPFTGLKSTSAFPTTRKTTTDITSIASNGGRVQ.

The protein belongs to the RuBisCO small chain family. In terms of assembly, heterohexadecamer of 8 large and 8 small subunits.

Its subcellular location is the plastid. It localises to the chloroplast. RuBisCO catalyzes two reactions: the carboxylation of D-ribulose 1,5-bisphosphate, the primary event in carbon dioxide fixation, as well as the oxidative fragmentation of the pentose substrate. Both reactions occur simultaneously and in competition at the same active site. Although the small subunit is not catalytic it is essential for maximal activity. This is Ribulose bisphosphate carboxylase small subunit, chloroplastic from Hevea brasiliensis (Para rubber tree).